The sequence spans 172 residues: Protein-export protein SecB (172 aa).

Belongs to the SecB family. As to quaternary structure, homotetramer, a dimer of dimers. One homotetramer interacts with 1 SecA dimer.

The protein localises to the cytoplasm. One of the proteins required for the normal export of preproteins out of the cell cytoplasm. It is a molecular chaperone that binds to a subset of precursor proteins, maintaining them in a translocation-competent state. It also specifically binds to its receptor SecA. The chain is Protein-export protein SecB from Dinoroseobacter shibae (strain DSM 16493 / NCIMB 14021 / DFL 12).